A 67-amino-acid polypeptide reads, in one-letter code: DNA-directed RNA polymerases I, II, and III subunit RPABC5 (67 aa).

Residues Cys-7, Cys-10, Cys-44, and Cys-45 each contribute to the Zn(2+) site.

It belongs to the archaeal Rpo10/eukaryotic RPB10 RNA polymerase subunit family. As to quaternary structure, component of the RNA polymerase I (Pol I), RNA polymerase II (Pol II) and RNA polymerase III (Pol III) complexes consisting of at least 13, 12 and 17 subunits, respectively. Pol I complex consists of a ten-subunit catalytic core composed of POLR1A/RPA1, POLR1B/RPA2, POLR1C/RPAC1, POLR1D/RPAC2, POLR1H/RPA12, POLR2E/RPABC1, POLR2F/RPABC2, POLR2H/RPABC3, POLR2K/RPABC4 and POLR2L/RPABC5; a mobile stalk subunit POLR1F/RPA43 protruding from the core and additional subunits homologous to general transcription factors POLR1E/RPA49 and POLR1G/RPA34. Part of Pol I pre-initiation complex (PIC), in which Pol I core assembles with RRN3 and promoter-bound UTBF and SL1/TIF-IB complex. Pol II complex contains a ten-subunit catalytic core composed of POLR2A/RPB1, POLR2B/RPB2, POLR2C/RPB3, POLR2I/RPB9, POLR2J/RPB11, POLR2E/RPABC1, POLR2F/RPABC2, POLR2H/RPABC3, POLR2K/RPABC4 and POLR2L/RPABC5 and a mobile stalk composed of two subunits POLR2D/RPB4 and POLR2G/RPB7. Part of Pol II(G) complex, in which Pol II core associates with an additional subunit POLR2M; unlike conventional Pol II, Pol II(G) functions as a transcriptional repressor. Part of TBP-based Pol II pre-initiation complex (PIC), in which Pol II core assembles with general transcription factors and other specific initiation factors including GTF2E1, GTF2E2, GTF2F1, GTF2F2, TCEA1, ERCC2, ERCC3, GTF2H2, GTF2H3, GTF2H4, GTF2H5, GTF2A1, GTF2A2, GTF2B and TBP; this large multi-subunit PIC complex mediates DNA unwinding and targets Pol II core to the transcription start site where the first phosphodiester bond forms. Pol III complex consists of a ten-subunit catalytic core composed of POLR3A/RPC1, POLR3B/RPC2, POLR1C/RPAC1, POLR1D/RPAC2, POLR3K/RPC10, POLR2E/RPABC1, POLR2F/RPABC2, POLR2H/RPABC3, POLR2K/RPABC4 and POLR2L/RPABC5; a mobile stalk composed of two subunits POLR3H/RPC8 and CRCP/RPC9, protruding from the core and functioning primarily in transcription initiation; and additional subunits homologous to general transcription factors of the RNA polymerase II machinery, POLR3C/RPC3-POLR3F/RPC6-POLR3G/RPC7 heterotrimer required for transcription initiation and POLR3D/RPC4-POLR3E/RPC5 heterodimer involved in both transcription initiation and termination.

It localises to the nucleus. The protein localises to the nucleolus. Functionally, DNA-dependent RNA polymerase catalyzes the transcription of DNA into RNA using the four ribonucleoside triphosphates as substrates. Common component of RNA polymerases I, II and III which synthesize ribosomal RNA precursors, mRNA precursors and many functional non-coding RNAs, and a small RNAs, such as 5S rRNA and tRNAs, respectively. This chain is DNA-directed RNA polymerases I, II, and III subunit RPABC5 (POLR2L), found in Bos taurus (Bovine).